An 83-amino-acid polypeptide reads, in one-letter code: Delta-conotoxin-like MVIC (83 aa).

A signal peptide spans 1 to 22 (MKLTCVMIVAVLFLTTWTFVTA). A propeptide spanning residues 23–49 (DDSRYGLKNLFPKARHEMKNPEASKLN) is cleaved from the precursor. Cystine bridges form between cysteine 54-cysteine 69, cysteine 61-cysteine 73, and cysteine 68-cysteine 78. 4-hydroxyproline is present on residues proline 56 and proline 65.

It belongs to the conotoxin O1 superfamily. As to expression, expressed by the venom duct.

The protein resides in the secreted. Functionally, delta-conotoxins bind to site 6 of voltage-gated sodium channels (Nav) and inhibit the inactivation process. In Conus magus (Magical cone), this protein is Delta-conotoxin-like MVIC.